A 644-amino-acid polypeptide reads, in one-letter code: MFQDNPLLAQLKQQLHSQTPRAEGVVKATEKGFGFLEVDAQKSYFIPPPQMKKVMHGDRIIAVIHSEKERESAEPEELVEPFLTRFVGKVQGKNDRLTIVPDHPLLKDAIPCRAARGLNHEFKEGDWAVAEMRRHPLKGDRSFYAELTQYITFGDDHFVPWWVTLARHNLEKEAPDGVATEMLDEGLVREDLTSLDFVTIDSASTEDMDDALFAKALPDDKLQLIVAIADPTAWIAEGSKLDKAAKIRAFTNYLPGFNIPMLPRELSDDLCSLRANEVRPVLACRMTLSADGTIEDNIEFFAATIESKAKLVYDQVSDWLENTGDWKPESEAIAEQVRLLAQICQRRGEWRHNHALVFKDRPDYRFILGEKGEVLDIVAEPRRIANRIVEEAMIAANICAARVLRDKLGFGIYNVHMGFDPANADALAALLKTHGLHVDAEEVLTLDGFCKLRRELDAQPTGFLDSRIRRFQSFAEISTEPGPHFGLGLEAYATWTSPIRKYGDMINHRLLKAVIKGETATRPQDEITVQMAERRRLNRMAERDVGDWLYARFLKDKAGTGTRFAAEIVDISRGGMRVRLVDNGAIAFIPAPFLHAVRDELVCSQENGTVQIKGETVYKVTDVIDVTIAEVRMETRSIIARPVA.

Positions 189 to 516 (REDLTSLDFV…NHRLLKAVIK (328 aa)) constitute an RNB domain. The S1 motif domain maps to 561–643 (GTRFAAEIVD…ETRSIIARPV (83 aa)).

It belongs to the RNR ribonuclease family. RNase II subfamily.

It localises to the cytoplasm. The enzyme catalyses Exonucleolytic cleavage in the 3'- to 5'-direction to yield nucleoside 5'-phosphates.. Functionally, involved in mRNA degradation. Hydrolyzes single-stranded polyribonucleotides processively in the 3' to 5' direction. This Shigella flexneri serotype 5b (strain 8401) protein is Exoribonuclease 2.